The sequence spans 1017 residues: Voltage-gated delayed rectifier potassium channel KCNH4 (1017 aa).

Topologically, residues 1 to 232 (MPVMKGLLAP…YSIPKAVWDG (232 aa)) are cytoplasmic. In terms of domain architecture, PAS spans 14–90 (FLDTIATRFD…QRLQKALEGH (77 aa)). Positions 93-145 (HRAEICFYRKDGSAFWCLLDMMPIKNELGEVVLFLFSFKDISQSGGPGLGSPG) constitute a PAC domain. The disordered stretch occupies residues 139-170 (PGLGSPGIHGDNNNHENSLGRRGASSRLRSTR). The helical transmembrane segment at 233–253 (LILLATFYVAVTVPYNVCFAG) threads the bilayer. Residues 254–262 (DDDTPITSR) lie on the Extracellular side of the membrane. The chain crosses the membrane as a helical span at residues 263 to 283 (HTLVSDIAVEMLFILDIILNF). Residues 284-305 (RTTYVSQSGQVVSAPRSIGLHY) are Cytoplasmic-facing. Residues 306 to 326 (LATWFFVDLIAALPFDLLYVF) form a helical membrane-spanning segment. Over 327–334 (NITVTSLV) the chain is Extracellular. A helical; Voltage-sensor membrane pass occupies residues 335 to 355 (HLLKTVRLLRLLRLLQKLERY). Residues 356-364 (SQCSAVVLT) are Cytoplasmic-facing. Residues 365 to 385 (LLMSVFALLAHWMACVWYVIG) traverse the membrane as a helical segment. Topologically, residues 386–427 (RREMEANDPLLWDIGWLHELGKRLEEPYVNGSAGGPSRRSAY) are extracellular. N-linked (GlcNAc...) asparagine glycosylation is present at Asn415. The pore-forming intramembrane region spans 428-448 (IAALYFTLSSLTSVGFGNVCA). The Selectivity filter motif lies at 440-445 (SVGFGN). At 449 to 454 (NTDAEK) the chain is on the extracellular side. A helical transmembrane segment spans residues 455–475 (IFSICTMLIGALMHAVVFGNV). At 476–1017 (TAIIQRMYSR…SFQSGSDTFH (542 aa)) the chain is on the cytoplasmic side. The cNMP-binding domain stretch occupies residues 557 to 621 (LFGAASRGCL…AILGKGDLIG (65 aa)). Disordered regions lie at residues 690 to 749 (GSEN…PNLS) and 771 to 870 (LVSS…ELAT). Polar residues predominate over residues 703–726 (PRLSQARSDTLGSSSDKTLPSITE). Composition is skewed to low complexity over residues 771 to 786 (LVSS…PALA) and 806 to 820 (PPQL…FGPP). Positions 873 to 907 (AEEVKEKVCRLNQEISRLNQEVSQLSRELRQVMGL) form a coiled coil. The tract at residues 972 to 1017 (SELRSSMVPPFPSEPDPLGPSPVPEASPLTPSLLKHSFQSGSDTFH) is disordered. Positions 980–996 (PPFPSEPDPLGPSPVPE) are enriched in pro residues. The span at 1008-1017 (SFQSGSDTFH) shows a compositional bias: polar residues.

The protein belongs to the potassium channel family. H (Eag) (TC 1.A.1.20) subfamily. Kv12.3/KCNH4 sub-subfamily. As to quaternary structure, the potassium channel is probably composed of a homo- or heterotetrameric complex of pore-forming alpha subunits that can associate with modulating beta subunits. In terms of tissue distribution, highly expressed in adult testis, and in adult and embryonic brain. In adult brain found in piriform cortex, olfactory tubercle, cerebral cortex, hippocampus pyramidial cells and dentate gyrus and basal ganglia of caudate/putamen and accumbens nucleus. Detected at intermediate levels in lung, spinal cord, and pituitary.

The protein resides in the membrane. The enzyme catalyses K(+)(in) = K(+)(out). In terms of biological role, pore-forming (alpha) subunit of a voltage-gated delayed rectifier. Activates at more negative voltages, exhibits fast prepulse-independent activation kinetics and deactivates much more slowly, but shows no inactivation. This chain is Voltage-gated delayed rectifier potassium channel KCNH4, found in Rattus norvegicus (Rat).